The chain runs to 358 residues: 4-hydroxy-3-methylbut-2-en-1-yl diphosphate synthase (flavodoxin) (358 aa).

[4Fe-4S] cluster is bound by residues cysteine 264, cysteine 267, cysteine 299, and glutamate 306.

It belongs to the IspG family. [4Fe-4S] cluster is required as a cofactor.

The catalysed reaction is (2E)-4-hydroxy-3-methylbut-2-enyl diphosphate + oxidized [flavodoxin] + H2O + 2 H(+) = 2-C-methyl-D-erythritol 2,4-cyclic diphosphate + reduced [flavodoxin]. Its pathway is isoprenoid biosynthesis; isopentenyl diphosphate biosynthesis via DXP pathway; isopentenyl diphosphate from 1-deoxy-D-xylulose 5-phosphate: step 5/6. Functionally, converts 2C-methyl-D-erythritol 2,4-cyclodiphosphate (ME-2,4cPP) into 1-hydroxy-2-methyl-2-(E)-butenyl 4-diphosphate. The sequence is that of 4-hydroxy-3-methylbut-2-en-1-yl diphosphate synthase (flavodoxin) from Helicobacter acinonychis (strain Sheeba).